Here is a 133-residue protein sequence, read N- to C-terminus: Small ribosomal subunit protein eS8 (133 aa).

The tract at residues 1-31 (MGFYQGPDNRKITGGLKGKHRDKRKYEIGNP) is disordered.

This sequence belongs to the eukaryotic ribosomal protein eS8 family. As to quaternary structure, part of the 30S ribosomal subunit.

This is Small ribosomal subunit protein eS8 from Saccharolobus solfataricus (strain ATCC 35092 / DSM 1617 / JCM 11322 / P2) (Sulfolobus solfataricus).